The sequence spans 293 residues: Bifunctional protein FolD (293 aa).

NADP(+)-binding positions include 165–167 (GRS), Ser190, and Ile231.

Belongs to the tetrahydrofolate dehydrogenase/cyclohydrolase family. In terms of assembly, homodimer.

It catalyses the reaction (6R)-5,10-methylene-5,6,7,8-tetrahydrofolate + NADP(+) = (6R)-5,10-methenyltetrahydrofolate + NADPH. It carries out the reaction (6R)-5,10-methenyltetrahydrofolate + H2O = (6R)-10-formyltetrahydrofolate + H(+). It functions in the pathway one-carbon metabolism; tetrahydrofolate interconversion. Its function is as follows. Catalyzes the oxidation of 5,10-methylenetetrahydrofolate to 5,10-methenyltetrahydrofolate and then the hydrolysis of 5,10-methenyltetrahydrofolate to 10-formyltetrahydrofolate. This chain is Bifunctional protein FolD, found in Parasynechococcus marenigrum (strain WH8102).